A 138-amino-acid polypeptide reads, in one-letter code: ATP synthase epsilon chain (138 aa).

This sequence belongs to the ATPase epsilon chain family. F-type ATPases have 2 components, CF(1) - the catalytic core - and CF(0) - the membrane proton channel. CF(1) has five subunits: alpha(3), beta(3), gamma(1), delta(1), epsilon(1). CF(0) has three main subunits: a, b and c.

It localises to the cellular thylakoid membrane. Its function is as follows. Produces ATP from ADP in the presence of a proton gradient across the membrane. The polypeptide is ATP synthase epsilon chain (atpC) (Synechococcus sp. (strain PCC 6716)).